The sequence spans 635 residues: 4-hydroxy-3-methylbut-2-enyl diphosphate reductase (635 aa).

A 4-hydroxy-3-methylbut-2-enyl diphosphate reductase region spans residues methionine 1–lysine 279. A [4Fe-4S] cluster-binding site is contributed by cysteine 12. Histidine 42 and histidine 77 together coordinate (2E)-4-hydroxy-3-methylbut-2-enyl diphosphate. Residues histidine 42 and histidine 77 each contribute to the dimethylallyl diphosphate site. Isopentenyl diphosphate-binding residues include histidine 42 and histidine 77. Position 99 (cysteine 99) interacts with [4Fe-4S] cluster. Histidine 127 lines the (2E)-4-hydroxy-3-methylbut-2-enyl diphosphate pocket. Histidine 127 is a binding site for dimethylallyl diphosphate. Histidine 127 is a binding site for isopentenyl diphosphate. Catalysis depends on glutamate 129, which acts as the Proton donor. Threonine 163 contributes to the (2E)-4-hydroxy-3-methylbut-2-enyl diphosphate binding site. Residue cysteine 191 participates in [4Fe-4S] cluster binding. Residues serine 219, serine 220, asparagine 221, and serine 263 each contribute to the (2E)-4-hydroxy-3-methylbut-2-enyl diphosphate site. Positions 219, 220, 221, and 263 each coordinate dimethylallyl diphosphate. Positions 219, 220, 221, and 263 each coordinate isopentenyl diphosphate. S1 motif domains lie at glycine 298–glutamate 373, lysine 380–arginine 455, aspartate 476–lysine 544, and glycine 561–lysine 630.

It in the N-terminal section; belongs to the IspH family. [4Fe-4S] cluster serves as cofactor.

The enzyme catalyses isopentenyl diphosphate + 2 oxidized [2Fe-2S]-[ferredoxin] + H2O = (2E)-4-hydroxy-3-methylbut-2-enyl diphosphate + 2 reduced [2Fe-2S]-[ferredoxin] + 2 H(+). It carries out the reaction dimethylallyl diphosphate + 2 oxidized [2Fe-2S]-[ferredoxin] + H2O = (2E)-4-hydroxy-3-methylbut-2-enyl diphosphate + 2 reduced [2Fe-2S]-[ferredoxin] + 2 H(+). It functions in the pathway isoprenoid biosynthesis; dimethylallyl diphosphate biosynthesis; dimethylallyl diphosphate from (2E)-4-hydroxy-3-methylbutenyl diphosphate: step 1/1. The protein operates within isoprenoid biosynthesis; isopentenyl diphosphate biosynthesis via DXP pathway; isopentenyl diphosphate from 1-deoxy-D-xylulose 5-phosphate: step 6/6. In terms of biological role, catalyzes the conversion of 1-hydroxy-2-methyl-2-(E)-butenyl 4-diphosphate (HMBPP) into a mixture of isopentenyl diphosphate (IPP) and dimethylallyl diphosphate (DMAPP). Acts in the terminal step of the DOXP/MEP pathway for isoprenoid precursor biosynthesis. The chain is 4-hydroxy-3-methylbut-2-enyl diphosphate reductase from Clostridium tetani (strain Massachusetts / E88).